The following is a 231-amino-acid chain: Ribonuclease HII (231 aa).

The RNase H type-2 domain occupies 23–214; sequence GPVAGVDEAG…VAKAHREWAL (192 aa). Residues aspartate 29, glutamate 30, and aspartate 123 each coordinate a divalent metal cation.

This sequence belongs to the RNase HII family. The cofactor is Mn(2+). Mg(2+) serves as cofactor.

Its subcellular location is the cytoplasm. It catalyses the reaction Endonucleolytic cleavage to 5'-phosphomonoester.. Functionally, endonuclease that specifically degrades the RNA of RNA-DNA hybrids. This chain is Ribonuclease HII, found in Corynebacterium efficiens (strain DSM 44549 / YS-314 / AJ 12310 / JCM 11189 / NBRC 100395).